The chain runs to 150 residues: Large ribosomal subunit protein eL19 (150 aa).

Residues 56–89 are disordered; the sequence is KGQSRARARAFQEARKKGRHRGPGSKKGKKTARM. Residues 71–89 show a composition bias toward basic residues; it reads KKGRHRGPGSKKGKKTARM.

It belongs to the eukaryotic ribosomal protein eL19 family. As to quaternary structure, part of the 50S ribosomal subunit.

In terms of biological role, binds to the 23S rRNA. The chain is Large ribosomal subunit protein eL19 from Thermococcus kodakarensis (strain ATCC BAA-918 / JCM 12380 / KOD1) (Pyrococcus kodakaraensis (strain KOD1)).